Here is a 92-residue protein sequence, read N- to C-terminus: MARSIWKGPFVRESLIKKVNKLIESGKSSVIKTWSRESAIIPLFVRFVFAVHNGNKFIPVVITEEMVGRKLGEFAPTRTFYGHAADRKVKRK.

It belongs to the universal ribosomal protein uS19 family.

Functionally, protein S19 forms a complex with S13 that binds strongly to the 16S ribosomal RNA. In Orientia tsutsugamushi (strain Boryong) (Rickettsia tsutsugamushi), this protein is Small ribosomal subunit protein uS19.